A 219-amino-acid polypeptide reads, in one-letter code: Ribosome maturation factor RimP (219 aa).

2 disordered regions span residues 1-38 and 189-219; these read MTQR…LATR and VEFT…DEER. The segment covering 198-219 has biased composition (acidic residues); the sequence is DAFDGTDEAGDFDDDDVEDEER.

The protein belongs to the RimP family.

The protein resides in the cytoplasm. Required for maturation of 30S ribosomal subunits. This Salinispora arenicola (strain CNS-205) protein is Ribosome maturation factor RimP.